Here is a 612-residue protein sequence, read N- to C-terminus: Dihydroxy-acid dehydratase (612 aa).

Asp-81 contacts Mg(2+). Residue Cys-122 coordinates [2Fe-2S] cluster. 2 residues coordinate Mg(2+): Asp-123 and Lys-124. Lys-124 is modified (N6-carboxylysine). Cys-195 lines the [2Fe-2S] cluster pocket. Glu-491 is a Mg(2+) binding site. Ser-517 serves as the catalytic Proton acceptor.

This sequence belongs to the IlvD/Edd family. In terms of assembly, homodimer. The cofactor is [2Fe-2S] cluster. Mg(2+) serves as cofactor.

The enzyme catalyses (2R)-2,3-dihydroxy-3-methylbutanoate = 3-methyl-2-oxobutanoate + H2O. It carries out the reaction (2R,3R)-2,3-dihydroxy-3-methylpentanoate = (S)-3-methyl-2-oxopentanoate + H2O. It participates in amino-acid biosynthesis; L-isoleucine biosynthesis; L-isoleucine from 2-oxobutanoate: step 3/4. Its pathway is amino-acid biosynthesis; L-valine biosynthesis; L-valine from pyruvate: step 3/4. In terms of biological role, functions in the biosynthesis of branched-chain amino acids. Catalyzes the dehydration of (2R,3R)-2,3-dihydroxy-3-methylpentanoate (2,3-dihydroxy-3-methylvalerate) into 2-oxo-3-methylpentanoate (2-oxo-3-methylvalerate) and of (2R)-2,3-dihydroxy-3-methylbutanoate (2,3-dihydroxyisovalerate) into 2-oxo-3-methylbutanoate (2-oxoisovalerate), the penultimate precursor to L-isoleucine and L-valine, respectively. The chain is Dihydroxy-acid dehydratase from Haemophilus influenzae (strain PittGG).